The primary structure comprises 263 residues: Putative hydro-lyase Pden_0321 (263 aa).

Belongs to the D-glutamate cyclase family.

This chain is Putative hydro-lyase Pden_0321, found in Paracoccus denitrificans (strain Pd 1222).